The primary structure comprises 432 residues: Glutamate-1-semialdehyde 2,1-aminomutase (432 aa).

At Lys-269 the chain carries N6-(pyridoxal phosphate)lysine.

This sequence belongs to the class-III pyridoxal-phosphate-dependent aminotransferase family. HemL subfamily. As to quaternary structure, homodimer. It depends on pyridoxal 5'-phosphate as a cofactor.

Its subcellular location is the cytoplasm. It carries out the reaction (S)-4-amino-5-oxopentanoate = 5-aminolevulinate. It participates in porphyrin-containing compound metabolism; protoporphyrin-IX biosynthesis; 5-aminolevulinate from L-glutamyl-tRNA(Glu): step 2/2. In Desulforudis audaxviator (strain MP104C), this protein is Glutamate-1-semialdehyde 2,1-aminomutase.